The sequence spans 410 residues: 3-phosphoshikimate 1-carboxyvinyltransferase (410 aa).

Residues K21, S22, and R26 each coordinate 3-phosphoshikimate. Residue K21 coordinates phosphoenolpyruvate. Phosphoenolpyruvate is bound by residues G69 and R97. 3-phosphoshikimate-binding residues include S143, S144, Q145, S171, D288, and K315. Phosphoenolpyruvate is bound at residue Q145. D288 (proton acceptor) is an active-site residue. 3 residues coordinate phosphoenolpyruvate: R319, R364, and K389.

Belongs to the EPSP synthase family. As to quaternary structure, monomer.

The protein localises to the cytoplasm. It carries out the reaction 3-phosphoshikimate + phosphoenolpyruvate = 5-O-(1-carboxyvinyl)-3-phosphoshikimate + phosphate. The protein operates within metabolic intermediate biosynthesis; chorismate biosynthesis; chorismate from D-erythrose 4-phosphate and phosphoenolpyruvate: step 6/7. Functionally, catalyzes the transfer of the enolpyruvyl moiety of phosphoenolpyruvate (PEP) to the 5-hydroxyl of shikimate-3-phosphate (S3P) to produce enolpyruvyl shikimate-3-phosphate and inorganic phosphate. The sequence is that of 3-phosphoshikimate 1-carboxyvinyltransferase from Bacteroides fragilis (strain ATCC 25285 / DSM 2151 / CCUG 4856 / JCM 11019 / LMG 10263 / NCTC 9343 / Onslow / VPI 2553 / EN-2).